Here is a 1395-residue protein sequence, read N- to C-terminus: DNA polymerase II large subunit (1395 aa).

Disordered stretches follow at residues 279 to 320 (IGKD…PRVE) and 657 to 704 (GNRM…MSDT). Positions 283 to 312 (EADEGDSAEDANGDDAGEGADDDGGDEADE) are enriched in acidic residues. Composition is skewed to basic and acidic residues over residues 661–671 (GRPEKSERRDL) and 690–700 (DVAKATKHADD).

The protein belongs to the archaeal DNA polymerase II family. As to quaternary structure, heterodimer of a large subunit and a small subunit. Post-translationally, this protein undergoes a protein self splicing that involves a post-translational excision of the intervening region (intein) followed by peptide ligation.

The catalysed reaction is DNA(n) + a 2'-deoxyribonucleoside 5'-triphosphate = DNA(n+1) + diphosphate. The enzyme catalyses Exonucleolytic cleavage in the 3'- to 5'-direction to yield nucleoside 5'-phosphates.. Possesses two activities: a DNA synthesis (polymerase) and an exonucleolytic activity that degrades single-stranded DNA in the 3'- to 5'-direction. Has a template-primer preference which is characteristic of a replicative DNA polymerase. This is DNA polymerase II large subunit from Haloarcula marismortui (strain ATCC 43049 / DSM 3752 / JCM 8966 / VKM B-1809) (Halobacterium marismortui).